The following is a 211-amino-acid chain: Small ribosomal subunit protein uS3 (211 aa).

One can recognise a KH type-2 domain in the interval 38–106 (LRKFIKKAFY…NIELNIIEVK (69 aa)).

The protein belongs to the universal ribosomal protein uS3 family. As to quaternary structure, part of the 30S ribosomal subunit. Forms a tight complex with proteins S10 and S14.

Binds the lower part of the 30S subunit head. Binds mRNA in the 70S ribosome, positioning it for translation. This chain is Small ribosomal subunit protein uS3, found in Ehrlichia chaffeensis (strain ATCC CRL-10679 / Arkansas).